Consider the following 402-residue polypeptide: MQSSAVFSASPSLPLLKPGRLSLRHPVTASSNLSVSPPNVVSVPPLPRRSWRLASSDSPLRAWSGLPSVSSPSLDTNRFKTAATAVPEEGEGSGKMTKVLELGLLFAMWYLFNIYFNIYNKQVLKALHAPMTVTLVQFAVGSVLITFMWALNLYKRPKISAAQLAAILPLAVVHTLGNLFTNMSLGKVSVSFTHTIKAMEPFFSVVLSAMFLGEVPTPWVIGSIIPIVGGVALASVTEVSFNWAGFLSAMASNLTNQSRNVLSKKVMVKKDDSLDNITLFSIITLMSLFLMAPVTFFSEGIKFTPSYIQSAGVNVQQIYTKSLIAALCFHAYQQVSYMILARVSPVTHSVGNCVKRVVVIVSSVIFFKTPVSPVNAFGTGIALAGVFLYSRVKRIKPKPKTA.

Residues 1–82 (MQSSAVFSAS…SLDTNRFKTA (82 aa)) constitute a chloroplast transit peptide. Topologically, residues 83 to 98 (ATAVPEEGEGSGKMTK) are chloroplast intermembrane. The helical transmembrane segment at 99-119 (VLELGLLFAMWYLFNIYFNIY) threads the bilayer. The region spanning 118 to 236 (IYNKQVLKAL…IVGGVALASV (119 aa)) is the EamA domain. At 120–131 (NKQVLKALHAPM) the chain is on the lumenal side. Residues 132–152 (TVTLVQFAVGSVLITFMWALN) traverse the membrane as a helical segment. At 153–209 (LYKRPKISAAQLAAILPLAVVHTLGNLFTNMSLGKVSVSFTHTIKAMEPFFSVVLSA) the chain is on the chloroplast intermembrane side. A helical transmembrane segment spans residues 210–230 (MFLGEVPTPWVIGSIIPIVGG). The Lumenal segment spans residues 231 to 278 (VALASVTEVSFNWAGFLSAMASNLTNQSRNVLSKKVMVKKDDSLDNIT). Residues 279 to 298 (LFSIITLMSLFLMAPVTFFS) form a helical membrane-spanning segment. Over 299–374 (EGIKFTPSYI…IFFKTPVSPV (76 aa)) the chain is Chloroplast intermembrane. Residues 375–394 (NAFGTGIALAGVFLYSRVKR) form a helical membrane-spanning segment. At 395 to 402 (IKPKPKTA) the chain is on the lumenal side.

It belongs to the TPT transporter family. TPT (TC 2.A.7.9) subfamily. In terms of assembly, homodimer.

It is found in the plastid. Its subcellular location is the chloroplast membrane. Mediates the export of fixed carbons from the chloroplasts into the cytosol in the form of triose phosphates. This Brassica oleracea var. botrytis (Cauliflower) protein is Triose phosphate/phosphate translocator, non-green plastid, chloroplastic (NGTPT).